The primary structure comprises 132 residues: Small ribosomal subunit protein uS8 (132 aa).

It belongs to the universal ribosomal protein uS8 family. As to quaternary structure, part of the 30S ribosomal subunit. Contacts proteins S5 and S12.

Functionally, one of the primary rRNA binding proteins, it binds directly to 16S rRNA central domain where it helps coordinate assembly of the platform of the 30S subunit. The protein is Small ribosomal subunit protein uS8 of Cereibacter sphaeroides (strain ATCC 17029 / ATH 2.4.9) (Rhodobacter sphaeroides).